The sequence spans 266 residues: MAAIRMGKLTTMPAGLIYASVSVHAAKEEESKKQLVKPEQLPIYTAPPLQSKYVEEQPGHLQMGFASIRTATGCYIGWCKGVYVFVKNGIMDTVQFGKDAYVYMKNPPRDFLPKMGVITVSGLAGLVSARKGSKFKKITYPLGLATLGATVCYPVQSVIIAKVTAKKIYATSQQIFGAVKSLWTKSSKEESLPKPKEKTKLGSSSEIEVPAKTTHVLKHSVPLPTELSSEAKTKSESTSDVQISEVGGKIIGTWGPNVTNSGVLRI.

Residues 1–27 (MAAIRMGKLTTMPAGLIYASVSVHAAK) constitute a mitochondrion transit peptide. Residues 28-110 (EEESKKQLVK…YVYMKNPPRD (83 aa)) are Mitochondrial intermembrane-facing. The helical transmembrane segment at 111–129 (FLPKMGVITVSGLAGLVSA) threads the bilayer. Residues 130–137 (RKGSKFKK) are Mitochondrial matrix-facing. Residues 138–155 (ITYPLGLATLGATVCYPV) traverse the membrane as a helical segment. Topologically, residues 156–266 (QSVIIAKVTA…NVTNSGVLRI (111 aa)) are mitochondrial intermembrane. At Ser204 the chain carries Phosphoserine.

It belongs to the apolipoprotein O/MICOS complex subunit Mic27 family. Component of the mitochondrial contact site and cristae organizing system (MICOS) complex, composed of at least MICOS10/MIC10, CHCHD3/MIC19, CHCHD6/MIC25, APOOL/MIC27, IMMT/MIC60, APOO/MIC23/MIC26 and MICOS13/MIC13. This complex was also known under the names MINOS or MitOS complex. The MICOS complex associates with mitochondrial outer membrane proteins SAMM50, MTX1 and MTX2 (together described as components of the mitochondrial outer membrane sorting assembly machinery (SAM) complex) and DNAJC11, mitochondrial inner membrane protein TMEM11 and with HSPA9. The MICOS and SAM complexes together with DNAJC11 are part of a large protein complex spanning both membranes termed the mitochondrial intermembrane space bridging (MIB) complex. Interacts with MICOS10/MIC10, IMMT/MIC60 and APOO/MIC23/MIC26.

It is found in the mitochondrion inner membrane. The protein resides in the mitochondrion. Its function is as follows. Component of the MICOS complex, a large protein complex of the mitochondrial inner membrane that plays crucial roles in the maintenance of crista junctions, inner membrane architecture, and formation of contact sites to the outer membrane. Specifically binds to cardiolipin (in vitro) but not to the precursor lipid phosphatidylglycerol. Plays a crucial role in crista junction formation and mitochondrial function. The protein is MICOS complex subunit MIC27 (APOOL) of Pongo abelii (Sumatran orangutan).